We begin with the raw amino-acid sequence, 341 residues long: Casein kinase I isoform alpha (341 aa).

Residues 16 to 284 form the Protein kinase domain; it reads YKLIRKIGSG…YLRQLFRILF (269 aa). ATP contacts are provided by residues 22–30 and Lys-45; that span reads IGSGSFGDI. Asp-135 acts as the Proton acceptor in catalysis. Over residues 306-320 the composition is skewed to polar residues; sequence QSQSSGVPGTNTTTQ. The disordered stretch occupies residues 306–341; the sequence is QSQSSGVPGTNTTTQGATVPSAGVPAGVAPGGTTPQ. Residues 321–341 are compositionally biased toward low complexity; it reads GATVPSAGVPAGVAPGGTTPQ.

The protein belongs to the protein kinase superfamily. CK1 Ser/Thr protein kinase family. Casein kinase I subfamily.

The enzyme catalyses L-seryl-[protein] + ATP = O-phospho-L-seryl-[protein] + ADP + H(+). It catalyses the reaction L-threonyl-[protein] + ATP = O-phospho-L-threonyl-[protein] + ADP + H(+). The protein is Casein kinase I isoform alpha (kin-19) of Caenorhabditis elegans.